Consider the following 95-residue polypeptide: MSVDATTVRRIAHLARIAVTDAEVPHLQGELNAMLAFVEQLGEVDVDGVEPMTSVTPMQMKKRVDAVNDGEIADQVVANAPATEDHFFLVPKVVE.

The protein belongs to the GatC family. In terms of assembly, heterotrimer of A, B and C subunits.

The catalysed reaction is L-glutamyl-tRNA(Gln) + L-glutamine + ATP + H2O = L-glutaminyl-tRNA(Gln) + L-glutamate + ADP + phosphate + H(+). The enzyme catalyses L-aspartyl-tRNA(Asn) + L-glutamine + ATP + H2O = L-asparaginyl-tRNA(Asn) + L-glutamate + ADP + phosphate + 2 H(+). Allows the formation of correctly charged Asn-tRNA(Asn) or Gln-tRNA(Gln) through the transamidation of misacylated Asp-tRNA(Asn) or Glu-tRNA(Gln) in organisms which lack either or both of asparaginyl-tRNA or glutaminyl-tRNA synthetases. The reaction takes place in the presence of glutamine and ATP through an activated phospho-Asp-tRNA(Asn) or phospho-Glu-tRNA(Gln). This is Aspartyl/glutamyl-tRNA(Asn/Gln) amidotransferase subunit C from Rhodopseudomonas palustris (strain BisB18).